The primary structure comprises 376 residues: UDP-N-acetylglucosamine--N-acetylmuramyl-(pentapeptide) pyrophosphoryl-undecaprenol N-acetylglucosamine transferase (376 aa).

UDP-N-acetyl-alpha-D-glucosamine contacts are provided by residues 14–16 (TGG), Asn128, Arg169, Ser201, Ile256, and Gln301.

The protein belongs to the glycosyltransferase 28 family. MurG subfamily.

It is found in the cell inner membrane. The catalysed reaction is di-trans,octa-cis-undecaprenyl diphospho-N-acetyl-alpha-D-muramoyl-L-alanyl-D-glutamyl-meso-2,6-diaminopimeloyl-D-alanyl-D-alanine + UDP-N-acetyl-alpha-D-glucosamine = di-trans,octa-cis-undecaprenyl diphospho-[N-acetyl-alpha-D-glucosaminyl-(1-&gt;4)]-N-acetyl-alpha-D-muramoyl-L-alanyl-D-glutamyl-meso-2,6-diaminopimeloyl-D-alanyl-D-alanine + UDP + H(+). Its pathway is cell wall biogenesis; peptidoglycan biosynthesis. In terms of biological role, cell wall formation. Catalyzes the transfer of a GlcNAc subunit on undecaprenyl-pyrophosphoryl-MurNAc-pentapeptide (lipid intermediate I) to form undecaprenyl-pyrophosphoryl-MurNAc-(pentapeptide)GlcNAc (lipid intermediate II). This Phocaeicola vulgatus (strain ATCC 8482 / DSM 1447 / JCM 5826 / CCUG 4940 / NBRC 14291 / NCTC 11154) (Bacteroides vulgatus) protein is UDP-N-acetylglucosamine--N-acetylmuramyl-(pentapeptide) pyrophosphoryl-undecaprenol N-acetylglucosamine transferase.